A 249-amino-acid chain; its full sequence is Putative TrmH family tRNA/rRNA methyltransferase (249 aa).

Residues Gly196, Ile216, and Leu225 each contribute to the S-adenosyl-L-methionine site.

The protein belongs to the class IV-like SAM-binding methyltransferase superfamily. RNA methyltransferase TrmH family.

In Staphylococcus epidermidis (strain ATCC 35984 / DSM 28319 / BCRC 17069 / CCUG 31568 / BM 3577 / RP62A), this protein is Putative TrmH family tRNA/rRNA methyltransferase.